Consider the following 100-residue polypeptide: MKFSKLSITLAVILTQAVFVLCGMKNEDFMEKGLESNELHDAIKKPVNSGKPDTERLLDCVLSRVCSPDANCCGLTPICKMGLCVPKVGGLLGGLLGGIL.

Positions 1–23 (MKFSKLSITLAVILTQAVFVLCG) are cleaved as a signal peptide. A propeptide spanning residues 24–55 (MKNEDFMEKGLESNELHDAIKKPVNSGKPDTE) is cleaved from the precursor. Cystine bridges form between Cys60-Cys73, Cys66-Cys79, and Cys72-Cys84.

It belongs to the neurotoxin 15 family. 02 (omega-actx) subfamily. In terms of tissue distribution, expressed by the venom gland.

It is found in the secreted. Potent inhibitor of insect, but not mammalian, voltage-gated calcium channels (Cav). The protein is Omega-hexatoxin-Asp2a of Atrax sp. (strain Illawarra) (Funnel-web spider).